A 349-amino-acid polypeptide reads, in one-letter code: Methylthioribose-1-phosphate isomerase (349 aa).

Substrate contacts are provided by residues 51–53 (RGA), Arg94, and Gln199. The active-site Proton donor is Asp240. 250-251 (NK) lines the substrate pocket.

It belongs to the EIF-2B alpha/beta/delta subunits family. MtnA subfamily. Homodimer.

The enzyme catalyses 5-(methylsulfanyl)-alpha-D-ribose 1-phosphate = 5-(methylsulfanyl)-D-ribulose 1-phosphate. It participates in amino-acid biosynthesis; L-methionine biosynthesis via salvage pathway; L-methionine from S-methyl-5-thio-alpha-D-ribose 1-phosphate: step 1/6. In terms of biological role, catalyzes the interconversion of methylthioribose-1-phosphate (MTR-1-P) into methylthioribulose-1-phosphate (MTRu-1-P). The chain is Methylthioribose-1-phosphate isomerase from Bacillus mycoides (strain KBAB4) (Bacillus weihenstephanensis).